The primary structure comprises 372 residues: Protein REVEILLE 7 (372 aa).

The 55-residue stretch at 71–125 (TVTKQREKWSEEEHDRFLEAIKLYGRGWRQIQEHIGTKTAVQIRSHAQKFFSKMA) folds into the HTH myb-type domain. A DNA-binding region (H-T-H motif) is located at residues 98 to 121 (WRQIQEHIGTKTAVQIRSHAQKFF). Residues 124-204 (MAQEADSRSE…RCSSPNSCTS (81 aa)) form a disordered region. Basic residues predominate over residues 145 to 155 (RPKRKPAHPYP). Positions 156–169 (RKSPVPYTQSPPPN) are enriched in pro residues. A compositionally biased stretch (polar residues) spans 178–204 (KSPTSVLSSFGSEDQVNRCSSPNSCTS).

It localises to the nucleus. In terms of biological role, transcription factor involved in phytochrome A-mediated cotyledon opening. Controlled by the central oscillator mediated by LHY and CCA1. Part of a regulatory circadian feedback loop. Regulates its own expression. In Arabidopsis thaliana (Mouse-ear cress), this protein is Protein REVEILLE 7 (RVE7).